Reading from the N-terminus, the 295-residue chain is Elongation factor Ts (295 aa).

The involved in Mg(2+) ion dislocation from EF-Tu stretch occupies residues 79-82 (TDFV).

Belongs to the EF-Ts family.

It localises to the cytoplasm. Its function is as follows. Associates with the EF-Tu.GDP complex and induces the exchange of GDP to GTP. It remains bound to the aminoacyl-tRNA.EF-Tu.GTP complex up to the GTP hydrolysis stage on the ribosome. In Bacillus cytotoxicus (strain DSM 22905 / CIP 110041 / 391-98 / NVH 391-98), this protein is Elongation factor Ts.